The primary structure comprises 176 residues: RNA pyrophosphohydrolase (176 aa).

The region spanning 6–149 (GYRPNVGIVI…KRDVYRRVMK (144 aa)) is the Nudix hydrolase domain. Residues 38–59 (GGINPGESAEQAMYRELFEEVG) carry the Nudix box motif.

The protein belongs to the Nudix hydrolase family. RppH subfamily. A divalent metal cation is required as a cofactor.

In terms of biological role, accelerates the degradation of transcripts by removing pyrophosphate from the 5'-end of triphosphorylated RNA, leading to a more labile monophosphorylated state that can stimulate subsequent ribonuclease cleavage. This chain is RNA pyrophosphohydrolase, found in Shigella boydii serotype 4 (strain Sb227).